The following is a 295-amino-acid chain: bZIP transcription factor 60 (295 aa).

Positions P101–A154 are disordered. Basic and acidic residues predominate over residues D106 to I127. Acidic residues predominate over residues H128–D138. Residues V140–G203 form the bZIP domain. The segment at K142–K162 is basic motif. Positions L168–L182 are leucine-zipper. A helical membrane pass occupies residues L224–M244.

Belongs to the bZIP family. In terms of assembly, interacts with BZIP28. Expressed in seedlings, rosette and cauline leaves, stems, buds, flowers, siliques, immature seeds, anthers and pollen grains.

It is found in the endoplasmic reticulum membrane. The protein resides in the nucleus. Transcription factor involved in the unfolded protein response (UPR). Acts during endoplasmic reticulum stress (ER) by activating unfolded protein response (UPR) target genes via direct binding to the UPR element (UPRE). Plays a role in plant immunity and abiotic stress responses. This chain is bZIP transcription factor 60, found in Arabidopsis thaliana (Mouse-ear cress).